We begin with the raw amino-acid sequence, 156 residues long: 2-C-methyl-D-erythritol 2,4-cyclodiphosphate synthase (156 aa).

Positions 8 and 10 each coordinate a divalent metal cation. Residues 8–10 and 34–35 contribute to the 4-CDP-2-C-methyl-D-erythritol 2-phosphate site; these read DVH and HS. An a divalent metal cation-binding site is contributed by His42. 4-CDP-2-C-methyl-D-erythritol 2-phosphate is bound by residues 56-58, 61-65, 100-106, 132-135, and Phe139; these read DIG, FPDTD, AQRPKMA, and TTEE.

The protein belongs to the IspF family. In terms of assembly, homotrimer. A divalent metal cation serves as cofactor.

The enzyme catalyses 4-CDP-2-C-methyl-D-erythritol 2-phosphate = 2-C-methyl-D-erythritol 2,4-cyclic diphosphate + CMP. The protein operates within isoprenoid biosynthesis; isopentenyl diphosphate biosynthesis via DXP pathway; isopentenyl diphosphate from 1-deoxy-D-xylulose 5-phosphate: step 4/6. In terms of biological role, involved in the biosynthesis of isopentenyl diphosphate (IPP) and dimethylallyl diphosphate (DMAPP), two major building blocks of isoprenoid compounds. Catalyzes the conversion of 4-diphosphocytidyl-2-C-methyl-D-erythritol 2-phosphate (CDP-ME2P) to 2-C-methyl-D-erythritol 2,4-cyclodiphosphate (ME-CPP) with a corresponding release of cytidine 5-monophosphate (CMP). In Clostridium perfringens (strain ATCC 13124 / DSM 756 / JCM 1290 / NCIMB 6125 / NCTC 8237 / Type A), this protein is 2-C-methyl-D-erythritol 2,4-cyclodiphosphate synthase.